The chain runs to 287 residues: 3-beta-hydroxysteroid sulfotransferase (287 aa).

44-49 (KSGTNW) contacts 3'-phosphoadenylyl sulfate. Substrate-binding residues include W72 and W77. Catalysis depends on H99, which acts as the Proton acceptor. 3'-phosphoadenylyl sulfate contacts are provided by residues R121, S129, Y184, 218 to 223 (SSFKFM), and 247 to 249 (RKG).

This sequence belongs to the sulfotransferase 1 family. Homodimer. Liver, intestine and kidney.

Its subcellular location is the cytoplasm. It catalyses the reaction an alcohol + 3'-phosphoadenylyl sulfate = an alkyl sulfate + adenosine 3',5'-bisphosphate + H(+). Sulfotransferase that utilizes 3'-phospho-5'-adenylyl sulfate (PAPS) as sulfonate donor to catalyze the sulfonation of 3-beta-hydroxyl groups of neutral steroids. High preference for C21 steroid (pregnenolone). In Cavia porcellus (Guinea pig), this protein is 3-beta-hydroxysteroid sulfotransferase (STD2).